The chain runs to 50 residues: uncharacterized protein (50 aa).

This is an uncharacterized protein from Saccharomyces cerevisiae (strain ATCC 204508 / S288c) (Baker's yeast).